We begin with the raw amino-acid sequence, 293 residues long: Urease accessory protein UreD (293 aa).

This sequence belongs to the UreD family. As to quaternary structure, ureD, UreF and UreG form a complex that acts as a GTP-hydrolysis-dependent molecular chaperone, activating the urease apoprotein by helping to assemble the nickel containing metallocenter of UreC. The UreE protein probably delivers the nickel.

The protein localises to the cytoplasm. Required for maturation of urease via the functional incorporation of the urease nickel metallocenter. This Cupriavidus metallidurans (strain ATCC 43123 / DSM 2839 / NBRC 102507 / CH34) (Ralstonia metallidurans) protein is Urease accessory protein UreD.